The chain runs to 529 residues: Bifunctional purine biosynthesis protein PurH (529 aa).

The MGS-like domain occupies methionine 1 to valine 148. An N6-acetyllysine modification is found at lysine 287.

Belongs to the PurH family.

The catalysed reaction is (6R)-10-formyltetrahydrofolate + 5-amino-1-(5-phospho-beta-D-ribosyl)imidazole-4-carboxamide = 5-formamido-1-(5-phospho-D-ribosyl)imidazole-4-carboxamide + (6S)-5,6,7,8-tetrahydrofolate. It carries out the reaction IMP + H2O = 5-formamido-1-(5-phospho-D-ribosyl)imidazole-4-carboxamide. The protein operates within purine metabolism; IMP biosynthesis via de novo pathway; 5-formamido-1-(5-phospho-D-ribosyl)imidazole-4-carboxamide from 5-amino-1-(5-phospho-D-ribosyl)imidazole-4-carboxamide (10-formyl THF route): step 1/1. It functions in the pathway purine metabolism; IMP biosynthesis via de novo pathway; IMP from 5-formamido-1-(5-phospho-D-ribosyl)imidazole-4-carboxamide: step 1/1. The polypeptide is Bifunctional purine biosynthesis protein PurH (Escherichia coli O45:K1 (strain S88 / ExPEC)).